Consider the following 113-residue polypeptide: Flagellar hook-basal body complex protein FliE (113 aa).

Belongs to the FliE family.

The protein resides in the bacterial flagellum basal body. The sequence is that of Flagellar hook-basal body complex protein FliE from Burkholderia mallei (strain NCTC 10247).